Reading from the N-terminus, the 971-residue chain is Lon protease homolog, mitochondrial (971 aa).

The N-terminal 55 residues, 1–55 (MYRAGAVLLRGATRTRLLAAASAHQSFATFSQRNQSILMMKSMELAGNSGERRFY), are a transit peptide targeting the mitochondrion. Residues 89–359 (VPMLAINRYP…IALLLIQKEK (271 aa)) enclose the Lon N-terminal domain. A disordered region spans residues 190–255 (TPKNETPLNG…PPSATGEKQK (66 aa)). A compositionally biased stretch (pro residues) spans 214 to 224 (LTPPPSPPPLA). 512–519 (GPPGVGKT) is a binding site for ATP. The disordered stretch occupies residues 718-749 (AEQQNEDEEPAEKATTAITENSEAEPITSTSS). A compositionally biased stretch (polar residues) spans 733–749 (TAITENSEAEPITSTSS). The Lon proteolytic domain maps to 784 to 971 (VTPPGVIMGL…YDELYEHLFQ (188 aa)). Residues Ser878 and Lys921 contribute to the active site.

The protein belongs to the peptidase S16 family. As to quaternary structure, homohexamer or homoheptamer. Organized in a ring with a central cavity.

It localises to the mitochondrion matrix. The enzyme catalyses Hydrolysis of proteins in presence of ATP.. Its function is as follows. ATP-dependent serine protease that mediates the selective degradation of misfolded, unassembled or oxidatively damaged polypeptides as well as certain short-lived regulatory proteins in the mitochondrial matrix. May also have a chaperone function in the assembly of inner membrane protein complexes. Participates in the regulation of mitochondrial gene expression and in the maintenance of the integrity of the mitochondrial genome. Binds to mitochondrial DNA in a site-specific manner. Involved in the degradation of transcription factor atfs-1 in the mitochondrion. This Caenorhabditis elegans protein is Lon protease homolog, mitochondrial.